A 258-amino-acid polypeptide reads, in one-letter code: NAD kinase (258 aa).

D51 serves as the catalytic Proton acceptor. NAD(+) contacts are provided by residues 51–52 (DG), 119–120 (ND), K130, D149, 160–165 (TAYSLS), and A184.

Belongs to the NAD kinase family. In terms of assembly, homodimer. The cofactor is a divalent metal cation.

The protein localises to the cytoplasm. The enzyme catalyses NAD(+) + ATP = ADP + NADP(+) + H(+). Its function is as follows. Involved in the regulation of the intracellular balance between NAD(H) and NADP(H), and is a key enzyme in the biosynthesis of NADP. Catalyzes specifically the phosphorylation on 2'-hydroxyl of the adenosine moiety of NAD to yield NADP. In Thermotoga maritima (strain ATCC 43589 / DSM 3109 / JCM 10099 / NBRC 100826 / MSB8), this protein is NAD kinase (NADK).